We begin with the raw amino-acid sequence, 329 residues long: MMKLTKLFLATAISLGVSSAVLAADYDLKFGMNAGTSSNEYKAAEMFAKEVKEKSQGKIEISLYPSSQLGDDRAMLKQLKDGSLDFTFAESARFQLFYPEAAVFALPYVISNYNVAQKALFDTEFGKDLIKKMDKDLGVTLLSQAYNGTRQTTSNRAINSIADMKGLKLRVPNAATNLAYAKYVGASPTPMAFSEVYLALQTNAVDGQENPLAAVQAQKFYEVQKFLAMTNHILNDQLYLVSNETYKELPEDLQKVVKDAAENAAKYHTKLFVDGEKDLVTFFEKQGVKITHPDLVPFKESMKPYYAEFVKQTGQKGESALKQIEAINP.

Positions 1–23 (MMKLTKLFLATAISLGVSSAVLA) are cleaved as a signal peptide. Residues Asn33, Asp72, Glu90, Arg150, Arg170, and Asn210 each contribute to the N-acetyl-beta-neuraminate site.

It belongs to the bacterial solute-binding protein 7 family. The complex comprises the extracytoplasmic solute receptor protein SiaP, and the fused transmembrane protein SiaT.

It localises to the periplasm. Its function is as follows. Part of the tripartite ATP-independent periplasmic (TRAP) transport system SiaPT involved in the uptake of sialic acid (N-acetyl-beta-neuraminate). This protein specifically binds sialic acid with high affinity. N-Acetylneuraminate (sialic acid) can then be incorporated into the lipooligosaccharides (LOS) as a terminal non-reducing sugar, protecting the bacterium from complement-mediated killing by normal human serum. The sequence is that of Sialic acid-binding periplasmic protein SiaP (siaP) from Haemophilus influenzae (strain ATCC 51907 / DSM 11121 / KW20 / Rd).